A 383-amino-acid chain; its full sequence is Opsin Rh3 (383 aa).

Residues 1-57 are Extracellular-facing; sequence MESGNVSSSLFGNVSTALRPEARLSAETRLLGWNVPPEELRHIPEHWLTYPEPPESM. N-linked (GlcNAc...) asparagine glycosylation is present at Asn13. The helical transmembrane segment at 58–82 threads the bilayer; the sequence is NYLLGTLYIFFTLMSMLGNGLVIWV. At 83–94 the chain is on the cytoplasmic side; it reads FSAAKSLRTPSN. The helical transmembrane segment at 95-119 threads the bilayer; sequence ILVINLAFCDFMMMVKTPIFIYNSF. The Extracellular segment spans residues 120–133; the sequence is HQGYALGHLGCQIF. Cys130 and Cys207 are disulfide-bonded. A helical transmembrane segment spans residues 134–153; the sequence is GIIGSYTGIAAGATNAFIAY. Residues 154-171 lie on the Cytoplasmic side of the membrane; sequence DRFNVITRPMEGKMTHGK. The chain crosses the membrane as a helical span at residues 172–196; sequence AIAMIIFIYMYATPWVVACYTETWG. The Extracellular segment spans residues 197–220; sequence RFVPEGYLTSCTFDYLTDNFDTRL. The chain crosses the membrane as a helical span at residues 221–248; the sequence is FVACIFFFSFVCPTTMITYYYSQIVGHV. Topologically, residues 249-284 are cytoplasmic; the sequence is FSHEKALRDQAKKMNVESLRSNVDKNKETAEIRIAK. A helical transmembrane segment spans residues 285-308; sequence AAITICFLFFCSWTPYGVMSLIGA. Residues 309-316 are Extracellular-facing; sequence FGDKTLLT. Residues 317-341 form a helical membrane-spanning segment; it reads PGATMIPACACKMVACIDPFVYAIS. Lys328 carries the N6-(retinylidene)lysine modification. Residues 342-383 are Cytoplasmic-facing; it reads HPRYRMELQKRCPWLALNEKAPESSAVASTSTTQEPQQTTAA. The segment at 362–383 is disordered; that stretch reads APESSAVASTSTTQEPQQTTAA. Over residues 369–383 the composition is skewed to low complexity; that stretch reads ASTSTTQEPQQTTAA.

This sequence belongs to the G-protein coupled receptor 1 family. Opsin subfamily. Phosphorylated on some or all of the serine and threonine residues present in the C-terminal region.

It localises to the membrane. Its function is as follows. Visual pigments are the light-absorbing molecules that mediate vision. They consist of an apoprotein, opsin, covalently linked to cis-retinal. The chain is Opsin Rh3 (Rh3) from Drosophila melanogaster (Fruit fly).